Here is a 148-residue protein sequence, read N- to C-terminus: Large ribosomal subunit protein bL27m (148 aa).

The N-terminal 30 residues, 1–30, are a transit peptide targeting the mitochondrion; it reads MALAVLAWRTRTAVIALLSPPQAAALAVRY.

It belongs to the bacterial ribosomal protein bL27 family. Component of the mitochondrial ribosome large subunit (39S) which comprises a 16S rRNA and about 50 distinct proteins.

It localises to the mitochondrion. In Bos taurus (Bovine), this protein is Large ribosomal subunit protein bL27m (MRPL27).